The chain runs to 811 residues: DNA mismatch repair protein MutS (811 aa).

595–602 (GPNMSGKS) provides a ligand contact to ATP.

The protein belongs to the DNA mismatch repair MutS family.

Functionally, this protein is involved in the repair of mismatches in DNA. It is possible that it carries out the mismatch recognition step. This protein has a weak ATPase activity. The polypeptide is DNA mismatch repair protein MutS (Pseudothermotoga lettingae (strain ATCC BAA-301 / DSM 14385 / NBRC 107922 / TMO) (Thermotoga lettingae)).